The sequence spans 276 residues: Secreted LysM effector LysM10 (276 aa).

Residues 1 to 22 form the signal peptide; sequence MLLSLVKFGILSVFLLAQEAVA. N27, N104, and N140 each carry an N-linked (GlcNAc...) asparagine glycan. The LysM domain occupies 219 to 264; the sequence is KTYIAKEDDTCKSISEAQSISTDRLVEVNHLDYSCSSLTSGTALCI. Residue N267 is glycosylated (N-linked (GlcNAc...) asparagine).

Belongs to the secreted LysM effector family.

Its subcellular location is the secreted. Its function is as follows. Secreted LysM effector that might have a role in sequestration of chitin oligosaccharides (breakdown products of fungal cell walls that are released during invasion and act as triggers of host immunity) to dampen host defense. This Penicillium expansum (Blue mold rot fungus) protein is Secreted LysM effector LysM10.